The following is a 477-amino-acid chain: Inner membrane transporter YgjI (477 aa).

Residues 1 to 8 (MSDTKRNT) are Periplasmic-facing. The chain crosses the membrane as a helical span at residues 9–29 (IGKFGLLSLTFAAVYSFNNVI). The Cytoplasmic segment spans residues 30–41 (NNNIELGLASAP). The chain crosses the membrane as a helical span at residues 42–62 (MFFLATIFYFIPFCLIIAEFV). The Periplasmic segment spans residues 63–83 (SLNKNSEAGVYAWVKSSLGGR). The chain crosses the membrane as a helical span at residues 84–104 (WAFITAYTYWFVNLFFFTSLL). At 105–120 (PRVIAYASYAFLGYEY) the chain is on the cytoplasmic side. Residues 121–141 (IMTPVATTIISMVLFAFSTWV) traverse the membrane as a helical segment. Topologically, residues 142–158 (STNGAKMLGPITSVTST) are periplasmic. Residues 159–179 (LMLLLTLSYILLAGTALVGGV) traverse the membrane as a helical segment. Topologically, residues 180-196 (QPADAITVDAMIPNFNW) are cytoplasmic. Residues 197–217 (AFLGVTTWIFMAAGGAESVAV) form a helical membrane-spanning segment. Residues 218–232 (YVNDVKGGSKSFVKV) lie on the Periplasmic side of the membrane. A helical transmembrane segment spans residues 233-253 (IILAGIFIGVLYSVSSVLINV). Topologically, residues 254–263 (FVSSKELKFT) are cytoplasmic. Residues 264–284 (GGSVQVFHGMAAYFGLPEALM) traverse the membrane as a helical segment. Residues 285 to 286 (NR) lie on the Periplasmic side of the membrane. Residues 287–307 (FVGLVSFTAMFGSLLMWTATP) traverse the membrane as a helical segment. Residues 308–335 (VKIFFSEIPEGIFGKKTVELNENGVPAR) lie on the Cytoplasmic side of the membrane. The helical transmembrane segment at 336-356 (AAWIQFLIVIPLMIIPMLGSN) threads the bilayer. Residues 357 to 364 (TVQDLMNT) are Periplasmic-facing. A helical membrane pass occupies residues 365–385 (IINMTAAASMLPPLFIMLAYL). Residues 386 to 405 (NLRAKLDHLPRDFRMGSRRT) are Cytoplasmic-facing. Residues 406-426 (GIIVVSMLIAIFAVGFVASTF) traverse the membrane as a helical segment. The Periplasmic segment spans residues 427 to 431 (PTGAN). A helical membrane pass occupies residues 432-452 (ILTIIFYNVGGIVIFLGFAWW). At 453–477 (KYSKYIKGLTAEERHIEATPASNVD) the chain is on the cytoplasmic side.

This sequence belongs to the amino acid-polyamine-organocation (APC) superfamily.

Its subcellular location is the cell inner membrane. The sequence is that of Inner membrane transporter YgjI (ygjI) from Escherichia coli (strain K12).